The sequence spans 341 residues: S-adenosylmethionine:tRNA ribosyltransferase-isomerase (341 aa).

This sequence belongs to the QueA family. Monomer.

The protein localises to the cytoplasm. The catalysed reaction is 7-aminomethyl-7-carbaguanosine(34) in tRNA + S-adenosyl-L-methionine = epoxyqueuosine(34) in tRNA + adenine + L-methionine + 2 H(+). It functions in the pathway tRNA modification; tRNA-queuosine biosynthesis. In terms of biological role, transfers and isomerizes the ribose moiety from AdoMet to the 7-aminomethyl group of 7-deazaguanine (preQ1-tRNA) to give epoxyqueuosine (oQ-tRNA). In Clostridium botulinum (strain Alaska E43 / Type E3), this protein is S-adenosylmethionine:tRNA ribosyltransferase-isomerase.